The sequence spans 336 residues: Probable allantoicase 2 (336 aa).

It belongs to the allantoicase family.

It catalyses the reaction allantoate + H2O = (S)-ureidoglycolate + urea. The protein operates within nitrogen metabolism; (S)-allantoin degradation; (S)-ureidoglycolate from allantoate (aminidohydrolase route): step 1/1. The protein is Probable allantoicase 2 of Burkholderia pseudomallei (strain K96243).